A 142-amino-acid polypeptide reads, in one-letter code: Translation initiation factor 2 subunit beta (142 aa).

It belongs to the eIF-2-beta/eIF-5 family. As to quaternary structure, heterotrimer composed of an alpha, a beta and a gamma chain.

In terms of biological role, eIF-2 functions in the early steps of protein synthesis by forming a ternary complex with GTP and initiator tRNA. The sequence is that of Translation initiation factor 2 subunit beta from Thermococcus gammatolerans (strain DSM 15229 / JCM 11827 / EJ3).